The sequence spans 776 residues: Mitochondrial intermediate peptidase (776 aa).

A mitochondrion-targeting transit peptide spans 1 to 28; sequence MFVRFYKRLDRQYIQSQRRWILSSNKCL. A disordered region spans residues 48-71; it reads DHWEESQAQNTSSEQDNKGKNSSY. Residues 53-71 show a composition bias toward polar residues; the sequence is SQAQNTSSEQDNKGKNSSY. H567 lines the Zn(2+) pocket. Residue E568 is part of the active site. Zn(2+)-binding residues include H571 and H574.

This sequence belongs to the peptidase M3 family. Zn(2+) serves as cofactor.

It localises to the mitochondrion matrix. The enzyme catalyses Release of an N-terminal octapeptide as second stage of processing of some proteins imported into the mitochondrion.. Cleaves proteins, imported into the mitochondrion, to their mature size. While most mitochondrial precursor proteins are processed to the mature form in one step by mitochondrial processing peptidase (MPP), the sequential cleavage by MIP of an octapeptide after initial processing by MPP is a required step for a subgroup of nuclear-encoded precursor proteins destined for the matrix or the inner membrane. The protein is Mitochondrial intermediate peptidase (OCT1) of Eremothecium gossypii (strain ATCC 10895 / CBS 109.51 / FGSC 9923 / NRRL Y-1056) (Yeast).